Reading from the N-terminus, the 328-residue chain is MIYQMQMPAKIEVDETTHTDYFGRFVAQPLERGYGVTLGNMMRRVLLASLPGTAITGIKVDGVFHEFSAIEGVREDVPEIVLNLKKVRFRSTCKRSCKTTLTITGPKDFTAGDIVAMEGEFDVLNKDLHIATVNEGSTLNIDVFVGRGRGYTPAEDNRPESMPIGYIAIDAIYTPIRNVKVAVENTRVGQRTDYEKMVLDVETDGSITPDDSISLAGRIINEHVAFFADFSPTEEEFTEEEFKQQDDEFEAMRKLLNTKIEDLDLSVRSHNCLRLAEIDSIGDLVSRKEDELLNYKNFGKKSLTELKEQLEKFELKFGMDITKYQMKG.

Residues 1–231 (MIYQMQMPAK…EHVAFFADFS (231 aa)) form an alpha N-terminal domain (alpha-NTD) region. The alpha C-terminal domain (alpha-CTD) stretch occupies residues 252 to 328 (MRKLLNTKIE…MDITKYQMKG (77 aa)).

The protein belongs to the RNA polymerase alpha chain family. Homodimer. The RNAP catalytic core consists of 2 alpha, 1 beta, 1 beta' and 1 omega subunit. When a sigma factor is associated with the core the holoenzyme is formed, which can initiate transcription.

The enzyme catalyses RNA(n) + a ribonucleoside 5'-triphosphate = RNA(n+1) + diphosphate. Functionally, DNA-dependent RNA polymerase catalyzes the transcription of DNA into RNA using the four ribonucleoside triphosphates as substrates. This is DNA-directed RNA polymerase subunit alpha from Chlorobium phaeovibrioides (strain DSM 265 / 1930) (Prosthecochloris vibrioformis (strain DSM 265)).